The following is a 290-amino-acid chain: Ciliary microtubule inner protein 6 (290 aa).

A disordered region spans residues 76 to 112; sequence ENQGDWWPHGKGLENPFQPPYDTKSTQRSDFKKPTCP. 2 mn regions span residues 128-160 and 213-246; these read GIVPLVSPDASAELQRNFKEHISFIHQYDARKT and SAESKMISPGLCRQNSQELLETKTHLSETDIRVA. The interval 197-228 is disordered; sequence SGSCSSEQSKKTEKGNSAESKMISPGLCRQNS.

Its subcellular location is the cell projection. The protein resides in the cilium. This chain is Ciliary microtubule inner protein 6 (CIMIP6), found in Bos taurus (Bovine).